The sequence spans 523 residues: Uridylate cyclase (523 aa).

2 consecutive Guanylate cyclase domains span residues 69–209 and 318–438; these read VHVY…AKLA and MSIF…IGIR. The a ribonucleoside 5'-triphosphate site is built by Tyr-72 and Arg-125. The Mn(2+) site is built by Asp-323, Ile-324, and Asp-372.

Belongs to the adenylyl cyclase class-4/guanylyl cyclase family. Pyrimidine cyclase subfamily. Monomer. It depends on Mn(2+) as a cofactor.

It localises to the cytoplasm. The enzyme catalyses UTP = 3',5'-cyclic UMP + diphosphate. In terms of biological role, pycsar (pyrimidine cyclase system for antiphage resistance) provides immunity against bacteriophage. The pyrimidine cyclase (PycC) synthesizes cyclic nucleotides in response to infection; these serve as specific second messenger signals. The signals activate the nearby effector, leading to bacterial cell death and abortive phage infection. A clade A Pycsar system. The pyrimidine cyclase gene of a two-gene Pycsar system, generates cyclic UMP (cUMP) from UTP, has little to no activity on ATP, CTP or GTP. Expression of this and effector RsPycTM (AC A0A4R2UGS4) probably confers resistance to some bacteriophage. The genes are probably only expressed in response to bacteriophage infection. The chain is Uridylate cyclase from Rhizobium sp. (strain PP-F2F-G36).